The chain runs to 1625 residues: E3 ubiquitin-protein ligase KEG (1625 aa).

An RING-type zinc finger spans residues 10–56; sequence CSVCHTRYNEDERVPLLLQCGHGFCKDCLSKMFSTSSDTTLTCPRCR. Residues 91–106 show a composition bias toward acidic residues; it reads YTDDEDDDDEEDGSDE. The segment at 91–110 is disordered; that stretch reads YTDDEDDDDEEDGSDEDGAR. The region spanning 141 to 427 is the Protein kinase domain; that stretch reads RQIGEESSSG…TFNAMLATFL (287 aa). ATP-binding positions include 147–155 and K176; that span reads SSSGGFGGV. ANK repeat units follow at residues 467–496, 510–540, 544–573, 579–608, 612–641, 647–676, 685–720, 725–754, 758–787, 791–826, and 832–863; these read DNPNNLHRVVLEGDFEGVRNILAKAAAGGG, DGQSALHLACRRGSAELVEAILEYGEANVDI, DGDPPLVFALAAGSPQCVHVLIKKGANVRS, SGPSVAHVCSYHGQPDCMRELLVAGADPNA, EGETVLHRAVAKKYTDCAIVILENGGSRSM, KCLTPLHMCVATWNVAVIKRWVEVSSPEEI, PVGTALCMAASIRKDHEKEGRELVQILLAAGADPTA, HGRTALHTAAMANNVELVRVILDAGVNANI, HNTIPLHMALARGANSCVSLLLESGSDCNI, EGDNAFHIAADAAKMIRENLDWLIVMLRSPDAAVDV, and KTVRDFLEALPREWISEDLMEALLKRGVHLSP.

In terms of assembly, interacts with ABI5 and EDR1. In terms of processing, autophosphotylated and autoubiquitinated in vitro. Post-translationally, phosphorylation enhances self-ubiquitination. Autoubiquitinated in response to abscisic acid (ABA) and subsequently targeted to proteolysis. As to expression, expressed in all tissues of young seedlings. In flowering plants, only detected in the youngest part of the stem, anthers and the receptacle of immature siliques. Not found in mature leave, older parts of the stem, flower parts other than anthers or mature siliques.

It localises to the golgi apparatus. It is found in the trans-Golgi network. The protein localises to the early endosome. The catalysed reaction is L-seryl-[protein] + ATP = O-phospho-L-seryl-[protein] + ADP + H(+). It catalyses the reaction L-threonyl-[protein] + ATP = O-phospho-L-threonyl-[protein] + ADP + H(+). It carries out the reaction S-ubiquitinyl-[E2 ubiquitin-conjugating enzyme]-L-cysteine + [acceptor protein]-L-lysine = [E2 ubiquitin-conjugating enzyme]-L-cysteine + N(6)-ubiquitinyl-[acceptor protein]-L-lysine.. The protein operates within protein modification; protein ubiquitination. In terms of biological role, mediates E2-dependent protein ubiquitination. Acts as a negative regulator of abscisic acid signaling. Required for ABI5 degradation, by mediating its ubiquitination. Together with EDR1, may regulate endocytic trafficking and/or the formation of signaling complexes on trans-Golgi network (TGN)/ early endosome (EE) vesicles during stress responses. This Arabidopsis thaliana (Mouse-ear cress) protein is E3 ubiquitin-protein ligase KEG (KEG).